The sequence spans 463 residues: Kynurenine 3-monooxygenase (463 aa).

It belongs to the aromatic-ring hydroxylase family. KMO subfamily. Requires FAD as cofactor.

It localises to the mitochondrion outer membrane. The enzyme catalyses L-kynurenine + NADPH + O2 + H(+) = 3-hydroxy-L-kynurenine + NADP(+) + H2O. Its pathway is cofactor biosynthesis; NAD(+) biosynthesis; quinolinate from L-kynurenine: step 1/3. In terms of biological role, catalyzes the hydroxylation of L-kynurenine (L-Kyn) to form 3-hydroxy-L-kynurenine (L-3OHKyn). Required for synthesis of quinolinic acid. This Yarrowia lipolytica (strain CLIB 122 / E 150) (Yeast) protein is Kynurenine 3-monooxygenase.